Reading from the N-terminus, the 120-residue chain is Large ribosomal subunit protein bL17 (120 aa).

This sequence belongs to the bacterial ribosomal protein bL17 family. As to quaternary structure, part of the 50S ribosomal subunit. Contacts protein L32.

In Bacillus licheniformis (strain ATCC 14580 / DSM 13 / JCM 2505 / CCUG 7422 / NBRC 12200 / NCIMB 9375 / NCTC 10341 / NRRL NRS-1264 / Gibson 46), this protein is Large ribosomal subunit protein bL17.